We begin with the raw amino-acid sequence, 562 residues long: Matrix metalloproteinase-25 (562 aa).

Residues 1-21 (MRLRLRLLALLLLLLAPPARA) form the signal peptide. The propeptide occupies 22–107 (PKPSAQDVSL…VAGLVRRRRR (86 aa)). The short motif at 88–95 (PRCSLPDV) is the Cysteine switch element. Residues Cys-90 and His-233 each contribute to the Zn(2+) site. Glu-234 is an active-site residue. 2 residues coordinate Zn(2+): His-237 and His-243. Positions 278 to 313 (LYGKAPQTPYDKPTRKPLAPPPQPPASPTHSPSFPI) are disordered. Residues 295-304 (LAPPPQPPAS) show a composition bias toward pro residues. 4 Hemopexin repeats span residues 314–363 (PDRC…WEGL), 367–412 (VRVV…GLPP), 413–461 (GEEV…EGAP), and 462–508 (PSPD…WLDC). Cys-317 and Cys-508 are disulfide-bonded. Residues 490–526 (SIKTEPDAPQPMGPNWLDCPAPSSGPRAPRPPKATPV) form a disordered region. The GPI-anchor amidated alanine moiety is linked to residue Ala-539. The propeptide at 540-562 (AGRWPAPIPLLLLPLLVGGVASR) is removed in mature form.

This sequence belongs to the peptidase M10A family. Requires Zn(2+) as cofactor. It depends on Ca(2+) as a cofactor. In terms of processing, the precursor is cleaved by a furin endopeptidase. Expressed predominantly in leukocytes, lung and spleen. Expressed also in colon carcinoma, astrocytoma and glioblastomas.

It localises to the cell membrane. Its subcellular location is the secreted. The protein localises to the extracellular space. It is found in the extracellular matrix. In terms of biological role, may activate progelatinase A. This chain is Matrix metalloproteinase-25 (MMP25), found in Homo sapiens (Human).